Reading from the N-terminus, the 299-residue chain is Ent-kaurene oxidase-like protein 1 (299 aa).

A helical membrane pass occupies residues 16–36 (AVVGVFVAAAVVGGFVAAVAL).

Belongs to the cytochrome P450 family. Expressed in roots and panicles.

It localises to the membrane. In Oryza sativa subsp. japonica (Rice), this protein is Ent-kaurene oxidase-like protein 1.